Reading from the N-terminus, the 279-residue chain is Pantothenate synthetase (279 aa).

ATP is bound at residue 26-33; the sequence is MGNLHEGH. The Proton donor role is filled by His33. Gln57 serves as a coordination point for (R)-pantoate. Residue Gln57 participates in beta-alanine binding. An ATP-binding site is contributed by 144–147; that stretch reads GKKD. (R)-pantoate is bound at residue Gln150. ATP contacts are provided by residues Val173 and 181–184; that span reads LSSR.

It belongs to the pantothenate synthetase family. In terms of assembly, homodimer.

The protein resides in the cytoplasm. It catalyses the reaction (R)-pantoate + beta-alanine + ATP = (R)-pantothenate + AMP + diphosphate + H(+). It functions in the pathway cofactor biosynthesis; (R)-pantothenate biosynthesis; (R)-pantothenate from (R)-pantoate and beta-alanine: step 1/1. Functionally, catalyzes the condensation of pantoate with beta-alanine in an ATP-dependent reaction via a pantoyl-adenylate intermediate. The polypeptide is Pantothenate synthetase (Burkholderia vietnamiensis (strain G4 / LMG 22486) (Burkholderia cepacia (strain R1808))).